The sequence spans 215 residues: Probable phosphoglycerate mutase GpmB (215 aa).

Substrate is bound by residues 8 to 15, 21 to 22, R58, R60, 82 to 85, 104 to 105, and 151 to 152; these read RHGETQWN, QG, ELDM, RR, and GI. H9 functions as the Tele-phosphohistidine intermediate in the catalytic mechanism. E82 functions as the Proton donor/acceptor in the catalytic mechanism.

This sequence belongs to the phosphoglycerate mutase family. GpmB subfamily.

The enzyme catalyses (2R)-2-phosphoglycerate = (2R)-3-phosphoglycerate. The protein operates within carbohydrate degradation; glycolysis; pyruvate from D-glyceraldehyde 3-phosphate: step 3/5. This chain is Probable phosphoglycerate mutase GpmB, found in Klebsiella pneumoniae subsp. pneumoniae (strain ATCC 700721 / MGH 78578).